The chain runs to 1279 residues: ATP-dependent helicase/nuclease subunit A (1279 aa).

A UvrD-like helicase ATP-binding domain is found at 4–499; that stretch reads TKWTDEQRQA…VKLFKNFRSR (496 aa). 25–32 contacts ATP; it reads AGAGAGKT. The UvrD-like helicase C-terminal domain maps to 526-853; sequence EEALKVGASY…RIMSIHKSKG (328 aa).

Belongs to the helicase family. AddA subfamily. Heterodimer of AddA and AddB/RexB. The cofactor is Mg(2+).

The catalysed reaction is Couples ATP hydrolysis with the unwinding of duplex DNA by translocating in the 3'-5' direction.. It catalyses the reaction ATP + H2O = ADP + phosphate + H(+). Its function is as follows. The heterodimer acts as both an ATP-dependent DNA helicase and an ATP-dependent, dual-direction single-stranded exonuclease. Recognizes the chi site generating a DNA molecule suitable for the initiation of homologous recombination. The AddA nuclease domain is required for chi fragment generation; this subunit has the helicase and 3' -&gt; 5' nuclease activities. This Clostridium botulinum (strain Hall / ATCC 3502 / NCTC 13319 / Type A) protein is ATP-dependent helicase/nuclease subunit A.